The chain runs to 509 residues: Light-independent protochlorophyllide reductase subunit B (509 aa).

D36 provides a ligand contact to [4Fe-4S] cluster. Residue D295 is the Proton donor of the active site. 430 to 431 contacts substrate; that stretch reads GM.

It belongs to the ChlB/BchB/BchZ family. In terms of assembly, protochlorophyllide reductase is composed of three subunits; ChlL, ChlN and ChlB. Forms a heterotetramer of two ChlB and two ChlN subunits. [4Fe-4S] cluster serves as cofactor.

The protein localises to the plastid. The protein resides in the chloroplast. It carries out the reaction chlorophyllide a + oxidized 2[4Fe-4S]-[ferredoxin] + 2 ADP + 2 phosphate = protochlorophyllide a + reduced 2[4Fe-4S]-[ferredoxin] + 2 ATP + 2 H2O. Its pathway is porphyrin-containing compound metabolism; chlorophyll biosynthesis (light-independent). Component of the dark-operative protochlorophyllide reductase (DPOR) that uses Mg-ATP and reduced ferredoxin to reduce ring D of protochlorophyllide (Pchlide) to form chlorophyllide a (Chlide). This reaction is light-independent. The NB-protein (ChlN-ChlB) is the catalytic component of the complex. In Mesostigma viride (Green alga), this protein is Light-independent protochlorophyllide reductase subunit B.